Consider the following 630-residue polypeptide: tRNA uridine 5-carboxymethylaminomethyl modification enzyme MnmG (630 aa).

13 to 18 is a binding site for FAD; the sequence is GGGHAG. Residue 273–287 participates in NAD(+) binding; sequence GPRYCPSIEDKIHRF.

It belongs to the MnmG family. In terms of assembly, homodimer. Heterotetramer of two MnmE and two MnmG subunits. FAD is required as a cofactor.

The protein localises to the cytoplasm. Functionally, NAD-binding protein involved in the addition of a carboxymethylaminomethyl (cmnm) group at the wobble position (U34) of certain tRNAs, forming tRNA-cmnm(5)s(2)U34. This is tRNA uridine 5-carboxymethylaminomethyl modification enzyme MnmG from Pseudomonas putida (strain W619).